The sequence spans 86 residues: Selenoprotein W (86 aa).

The cysteinyl-selenocysteine (Cys-Sec); redox-active cross-link spans 10–13 (CGGU). Residue U13 is a non-standard amino acid, selenocysteine.

The protein belongs to the SelWTH family. Selenoprotein W subfamily.

The protein resides in the cytoplasm. Functionally, plays a role as a glutathione (GSH)-dependent antioxidant. May be involved in a redox-related process. May play a role in the myopathies of selenium deficiency. The chain is Selenoprotein W from Danio rerio (Zebrafish).